The following is a 367-amino-acid chain: MKGGRVQVITKNNSIAKHQLGEYAVHIYVLLYYLSMREILREFEEACLLQGLVSPSTRLLISCSGGQDSVTLLFLLCQLQTNWTWRLGVVYCNHMWRYGSIETPAKLARICLLFGVSCSFSVSGSRLQKEEEGRSWRLRVLCRMSSIHSWFYISTGHTASDRIETLLSNVLRGSSSSGMRSINWYTSLDTQVGHRRISIPIIRPLLGISRLELRNYANRWKLPLCYDPSNQDQRIRRNRIRHELLPYLRHWWNPQIDRLLAQTAEVTSWESSYYDLICTQICQQYEWIGDGGVRFPWRIFHSIPTSLHSRILWIFLNRALVFLNPAHGFQGNFDILQFLLETKTCHCRHGSIYISKDVDWLRMTLVK.

Residue 64 to 69 (SGGQDS) participates in ATP binding.

The protein belongs to the tRNA(Ile)-lysidine synthase family.

The protein localises to the plastid. The protein resides in the chloroplast. It catalyses the reaction cytidine(34) in tRNA(Ile2) + L-lysine + ATP = lysidine(34) in tRNA(Ile2) + AMP + diphosphate + H(+). In terms of biological role, ligates lysine onto the cytidine present at position 34 of the AUA codon-specific tRNA(Ile) that contains the anticodon CAU, in an ATP-dependent manner. Cytidine is converted to lysidine, thus changing the amino acid specificity of the tRNA from methionine to isoleucine. The polypeptide is tRNA(Ile)-lysidine synthase, chloroplastic (Nephroselmis olivacea (Green alga)).